A 311-amino-acid polypeptide reads, in one-letter code: MTSYAITAVASSKVNLHLGVGNARDDGYHELVTVFQSLSLHDTITVTPAADDMHDAEDQGIVATLSVSGDSAQAVPTDATNLAWQAAEKMYQAHRRNGGAPAKRVHIAIDKGIPVAGGMAGGSADAAATLAAMAQYLGNTNTEQEILSIAAELGSDVPFTYLGDTRLGTGRGEQLVPVLSRGTYHWALAFSAQGLSTPEVFRKIDQMDRQPHLDVTALNAALITGDPHKVAAHLHNDLQAAALSLRPELRTILEQGRAAGALAGIVSGSGPTCAFLCEDAETAQAVAAELSVHYRTAVATGPVRGAHVKGH.

Residue K13 is part of the active site. 114–124 (PVAGGMAGGSA) lines the ATP pocket. D156 is an active-site residue.

This sequence belongs to the GHMP kinase family. IspE subfamily.

It catalyses the reaction 4-CDP-2-C-methyl-D-erythritol + ATP = 4-CDP-2-C-methyl-D-erythritol 2-phosphate + ADP + H(+). It functions in the pathway isoprenoid biosynthesis; isopentenyl diphosphate biosynthesis via DXP pathway; isopentenyl diphosphate from 1-deoxy-D-xylulose 5-phosphate: step 3/6. In terms of biological role, catalyzes the phosphorylation of the position 2 hydroxy group of 4-diphosphocytidyl-2C-methyl-D-erythritol. This chain is 4-diphosphocytidyl-2-C-methyl-D-erythritol kinase, found in Corynebacterium diphtheriae (strain ATCC 700971 / NCTC 13129 / Biotype gravis).